A 158-amino-acid chain; its full sequence is Cyclic pyranopterin monophosphate synthase (158 aa).

Substrate contacts are provided by residues 76–78 (LCH) and 114–115 (ME). Asp-129 is a catalytic residue.

It belongs to the MoaC family. As to quaternary structure, homohexamer; trimer of dimers.

The enzyme catalyses (8S)-3',8-cyclo-7,8-dihydroguanosine 5'-triphosphate = cyclic pyranopterin phosphate + diphosphate. Its pathway is cofactor biosynthesis; molybdopterin biosynthesis. Its function is as follows. Catalyzes the conversion of (8S)-3',8-cyclo-7,8-dihydroguanosine 5'-triphosphate to cyclic pyranopterin monophosphate (cPMP). This is Cyclic pyranopterin monophosphate synthase from Shewanella frigidimarina (strain NCIMB 400).